The sequence spans 83 residues: Large ribosomal subunit protein bL27 (83 aa).

A disordered region spans residues methionine 1 to tyrosine 20. The segment covering alanine 7–glutamine 19 has biased composition (polar residues).

This sequence belongs to the bacterial ribosomal protein bL27 family.

This is Large ribosomal subunit protein bL27 from Bifidobacterium animalis subsp. lactis (strain AD011).